We begin with the raw amino-acid sequence, 346 residues long: Sensor protein kinase GraS (346 aa).

The next 2 membrane-spanning stretches (helical) occupy residues 15–35 and 43–63; these read MNWI…SLID and LFYI…LTYF. The 207-residue stretch at 126–332 folds into the Histidine kinase domain; the sequence is EFVHDIKTPV…TVRLIFPLQN (207 aa).

Interacts with GraX.

It localises to the cell membrane. It carries out the reaction ATP + protein L-histidine = ADP + protein N-phospho-L-histidine.. Its function is as follows. Member of the two-component regulatory system GraR/GraS involved in resistance against cationic antimicrobial peptides (CAMPs). Functions as a sensor protein kinase which phosphorylates GraR through the auxiliary protein GraX. In turn, GraR up-regulates many genes such as adhesins, exoproteins, transporters, toxins, and proteins involved in cell wall synthesis. Down-regulates the expression of many genes involved in RNA and amino acid synthesis or glycolysis. This Staphylococcus aureus (strain MSSA476) protein is Sensor protein kinase GraS (graS).